Reading from the N-terminus, the 211-residue chain is Probable GTP-binding protein EngB (211 aa).

Residues 22–195 (PFPEVAFAGK…WQLIDSYVLP (174 aa)) enclose the EngB-type G domain. Residues 30 to 37 (GKSNVGKS), 57 to 61 (GKTQT), 75 to 78 (DLPG), 142 to 145 (TKLD), and 174 to 176 (FSS) contribute to the GTP site. Mg(2+) contacts are provided by S37 and T59.

The protein belongs to the TRAFAC class TrmE-Era-EngA-EngB-Septin-like GTPase superfamily. EngB GTPase family. It depends on Mg(2+) as a cofactor.

In terms of biological role, necessary for normal cell division and for the maintenance of normal septation. This is Probable GTP-binding protein EngB from Lachnospira eligens (strain ATCC 27750 / DSM 3376 / VPI C15-48 / C15-B4) (Eubacterium eligens).